The chain runs to 121 residues: Putative iron-sulfur cluster insertion protein ErpA (121 aa).

3 residues coordinate iron-sulfur cluster: Cys-49, Cys-113, and Cys-115.

It belongs to the HesB/IscA family. In terms of assembly, homodimer. It depends on iron-sulfur cluster as a cofactor.

Required for insertion of 4Fe-4S clusters. The polypeptide is Putative iron-sulfur cluster insertion protein ErpA (Methylibium petroleiphilum (strain ATCC BAA-1232 / LMG 22953 / PM1)).